Consider the following 144-residue polypeptide: Cytochrome c oxidase subunit 4 isoform 1, mitochondrial (144 aa).

At 1-73 (SVVKSEDFSL…SFAEMNRGSN (73 aa)) the chain is on the mitochondrial matrix side. Lysine 4 carries the N6-acetyllysine; alternate modification. At lysine 4 the chain carries N6-succinyllysine; alternate. Lysine 28 bears the N6-acetyllysine mark. A phosphoserine mark is found at serine 31 and serine 33. The residue at position 35 (lysine 35) is an N6-acetyllysine; alternate. The residue at position 35 (lysine 35) is an N6-succinyllysine; alternate. Residue lysine 42 is modified to N6-acetyllysine. A helical transmembrane segment spans residues 74-99 (EWKTVVGGAMFFIGFTALVIMWQKHY). Residues 100–144 (VYGPLPQSFDKEWVAKQTKRMLDMKVNPIQGLASKWDYEKNEWKK) are Mitochondrial intermembrane-facing.

It belongs to the cytochrome c oxidase IV family. Component of the cytochrome c oxidase (complex IV, CIV), a multisubunit enzyme composed of 14 subunits. The complex is composed of a catalytic core of 3 subunits MT-CO1, MT-CO2 and MT-CO3, encoded in the mitochondrial DNA, and 11 supernumerary subunits COX4I, COX5A, COX5B, COX6A, COX6B, COX6C, COX7A, COX7B, COX7C, COX8 and NDUFA4, which are encoded in the nuclear genome. The complex exists as a monomer or a dimer and forms supercomplexes (SCs) in the inner mitochondrial membrane with NADH-ubiquinone oxidoreductase (complex I, CI) and ubiquinol-cytochrome c oxidoreductase (cytochrome b-c1 complex, complex III, CIII), resulting in different assemblies (supercomplex SCI(1)III(2)IV(1) and megacomplex MCI(2)III(2)IV(2)). Interacts with PHB2; the interaction decreases in absence of SPHK2. Interacts with AFG1L. Interacts with ABCB7; this interaction allows the regulation of cellular iron homeostasis and cellular reactive oxygen species (ROS) levels in cardiomyocytes. Interacts with FLVCR2; this interaction occurs in the absence of heme and is disrupted upon heme binding. Interacts with IRGC.

The protein resides in the mitochondrion inner membrane. The protein operates within energy metabolism; oxidative phosphorylation. Functionally, component of the cytochrome c oxidase, the last enzyme in the mitochondrial electron transport chain which drives oxidative phosphorylation. The respiratory chain contains 3 multisubunit complexes succinate dehydrogenase (complex II, CII), ubiquinol-cytochrome c oxidoreductase (cytochrome b-c1 complex, complex III, CIII) and cytochrome c oxidase (complex IV, CIV), that cooperate to transfer electrons derived from NADH and succinate to molecular oxygen, creating an electrochemical gradient over the inner membrane that drives transmembrane transport and the ATP synthase. Cytochrome c oxidase is the component of the respiratory chain that catalyzes the reduction of oxygen to water. Electrons originating from reduced cytochrome c in the intermembrane space (IMS) are transferred via the dinuclear copper A center (CU(A)) of subunit 2 and heme A of subunit 1 to the active site in subunit 1, a binuclear center (BNC) formed by heme A3 and copper B (CU(B)). The BNC reduces molecular oxygen to 2 water molecules using 4 electrons from cytochrome c in the IMS and 4 protons from the mitochondrial matrix. This is Cytochrome c oxidase subunit 4 isoform 1, mitochondrial (COX4I1) from Gorilla gorilla gorilla (Western lowland gorilla).